The following is a 219-amino-acid chain: Thymidylate kinase (219 aa).

ATP is bound at residue 7-14; the sequence is GIDGAGKS.

It belongs to the thymidylate kinase family.

It catalyses the reaction dTMP + ATP = dTDP + ADP. Its function is as follows. Phosphorylation of dTMP to form dTDP in both de novo and salvage pathways of dTTP synthesis. The chain is Thymidylate kinase from Chlorobium limicola (strain DSM 245 / NBRC 103803 / 6330).